The sequence spans 405 residues: Argininosuccinate synthase (405 aa).

Residues Ala-10 to Ser-18 and Ala-37 each bind ATP. 2 residues coordinate L-citrulline: Tyr-88 and Ser-93. An ATP-binding site is contributed by Gly-118. L-aspartate contacts are provided by Thr-120, Asn-124, and Asp-125. Residue Asn-124 coordinates L-citrulline. 5 residues coordinate L-citrulline: Arg-128, Ser-179, Ser-188, Glu-264, and Tyr-276.

The protein belongs to the argininosuccinate synthase family. Type 1 subfamily. In terms of assembly, homotetramer.

Its subcellular location is the cytoplasm. It carries out the reaction L-citrulline + L-aspartate + ATP = 2-(N(omega)-L-arginino)succinate + AMP + diphosphate + H(+). Its pathway is amino-acid biosynthesis; L-arginine biosynthesis; L-arginine from L-ornithine and carbamoyl phosphate: step 2/3. This Pseudomonas fluorescens (strain SBW25) protein is Argininosuccinate synthase.